The following is a 195-amino-acid chain: Imidazoleglycerol-phosphate dehydratase (195 aa).

It belongs to the imidazoleglycerol-phosphate dehydratase family.

Its subcellular location is the cytoplasm. The enzyme catalyses D-erythro-1-(imidazol-4-yl)glycerol 3-phosphate = 3-(imidazol-4-yl)-2-oxopropyl phosphate + H2O. It participates in amino-acid biosynthesis; L-histidine biosynthesis; L-histidine from 5-phospho-alpha-D-ribose 1-diphosphate: step 6/9. This is Imidazoleglycerol-phosphate dehydratase from Beijerinckia indica subsp. indica (strain ATCC 9039 / DSM 1715 / NCIMB 8712).